Here is a 210-residue protein sequence, read N- to C-terminus: Chaperone protein TorD (210 aa).

Belongs to the TorD/DmsD family. TorD subfamily.

The protein localises to the cytoplasm. In terms of biological role, involved in the biogenesis of TorA. Acts on TorA before the insertion of the molybdenum cofactor and, as a result, probably favors a conformation of the apoenzyme that is competent for acquiring the cofactor. The protein is Chaperone protein TorD of Salmonella newport (strain SL254).